Here is a 459-residue protein sequence, read N- to C-terminus: UDP-glycosyltransferase 78D3 (459 aa).

UDP-alpha-D-glucose contacts are provided by residues 338–340, 355–363, and 377–380; these read APQ, HGGWNSVLE, and FGDH.

The protein belongs to the UDP-glycosyltransferase family.

Functionally, possesses low quercetin 3-O-glucosyltransferase activity in vitro. The sequence is that of UDP-glycosyltransferase 78D3 (UGT78D3) from Arabidopsis thaliana (Mouse-ear cress).